The chain runs to 161 residues: uncharacterized protein (161 aa).

The protein to M.thermoautotrophicum MTH862.

This is an uncharacterized protein from Methanocaldococcus jannaschii (strain ATCC 43067 / DSM 2661 / JAL-1 / JCM 10045 / NBRC 100440) (Methanococcus jannaschii).